The chain runs to 309 residues: Glutaminase (309 aa).

Residues Ser-65, Asn-117, Glu-162, Asn-169, Tyr-193, Tyr-245, and Val-263 each coordinate substrate.

It belongs to the glutaminase family. In terms of assembly, homotetramer.

The catalysed reaction is L-glutamine + H2O = L-glutamate + NH4(+). In Geobacillus thermodenitrificans (strain NG80-2), this protein is Glutaminase.